Reading from the N-terminus, the 116-residue chain is Methionine-R-sulfoxide reductase B1 (116 aa).

The region spanning 1–106 is the MsrB domain; that stretch reads MSFCSFFGGE…FSSSLKFIPK (106 aa). Residues Cys-23, Cys-26, Cys-71, and Cys-74 each coordinate Zn(2+). Catalysis depends on Sec-95, which acts as the Nucleophile. Sec-95 is a non-standard amino acid (selenocysteine).

The protein belongs to the MsrB Met sulfoxide reductase family. It depends on Zn(2+) as a cofactor. Truncated MSRB1/SEPX1 proteins produced by failed UGA/Sec decoding are ubiquitinated by the CRL2(FEM1C) E3 ubiquitin-protein ligase complex.

Its subcellular location is the cytoplasm. The protein resides in the nucleus. It localises to the cytoskeleton. The catalysed reaction is L-methionyl-[protein] + [thioredoxin]-disulfide + H2O = L-methionyl-(R)-S-oxide-[protein] + [thioredoxin]-dithiol. It carries out the reaction [thioredoxin]-disulfide + L-methionine + H2O = L-methionine (R)-S-oxide + [thioredoxin]-dithiol. Methionine-sulfoxide reductase that specifically reduces methionine (R)-sulfoxide back to methionine. While in many cases, methionine oxidation is the result of random oxidation following oxidative stress, methionine oxidation is also a post-translational modification that takes place on specific residue. Acts as a regulator of actin assembly by reducing methionine (R)-sulfoxide mediated by MICALs (MICAL1, MICAL2 or MICAL3) on actin, thereby promoting filament repolymerization. Plays a role in innate immunity by reducing oxidized actin, leading to actin repolymerization in macrophages. The chain is Methionine-R-sulfoxide reductase B1 (Msrb1) from Rattus norvegicus (Rat).